A 545-amino-acid chain; its full sequence is MSIFIGGAWPYANGSLHIGHAAALLPGDILARYYRQKGEEVLYVSGSDCNGTPISIRAKKENKSVKEIADFYHKEFKETFEKLGFTYDLYSRTDSPLHHEIVQELFLQLYEKKFLYTKKIKQLYCTFDNQFLPDRFVEGKCPNCGTHSRGDQCDNCSAILDPIDLVDKRCSICSNEPEVRETEHFYYVFSEFQNLLETYLNDAEETVRWRKNAINLTKRYLREGLPDRAVTRDLPNGIPVPIDGFRDKKIYVWFEAVAGYYTASVDWAQKLQNNITDFWNNRTKSYYVHGKDNIPFHTIIWPAILSGLEIEPLPEYIISSEYLTLENKKISTSNNWAIWLNDIIKKYDADSIRYFLTINAPEMKDANFSWREFIYSHNSELLGSYGNFINRTLKFIEKYFESEIPTKYLEGEILYNLKELYTTVGNLVESGHMKQALEEIFEYIRSANKFYDDMKPWALRESDIEKCKEVLATCVIIILNLGQMLNPFIPFSGKKIEDMFKTKLNTWNYISNLPNKLSDVSMLFDRIDLKKIDEEVLELQQTSSR.

A 'HIGH' region motif is present at residues 10 to 20; the sequence is PYANGSLHIGH. Positions 141, 144, 153, and 156 each coordinate Zn(2+). A 'KMSKS' region motif is present at residues 329–333; the sequence is KISTS. Position 332 (threonine 332) interacts with ATP.

Belongs to the class-I aminoacyl-tRNA synthetase family. MetG type 1 subfamily. As to quaternary structure, monomer. Zn(2+) serves as cofactor.

It is found in the cytoplasm. The enzyme catalyses tRNA(Met) + L-methionine + ATP = L-methionyl-tRNA(Met) + AMP + diphosphate. Is required not only for elongation of protein synthesis but also for the initiation of all mRNA translation through initiator tRNA(fMet) aminoacylation. This Streptococcus pneumoniae (strain 70585) protein is Methionine--tRNA ligase.